A 159-amino-acid polypeptide reads, in one-letter code: MNIDIVCVGKVKERYLRDAIDEYRKRLSRFAKVDVIEVADEKTPEHASDTLNAQIKEKEGERILKHLRDGAFVVALAIEGDQLTSEQLAARIAQWGLHGVSHLQFVIGGSLGLDPRVLRRANMPLSFSKMTFPHQLMRVILLEQIYRAFKINAHEPYHK.

Residues L76, G108, and 127 to 132 contribute to the S-adenosyl-L-methionine site; that span reads FSKMTF.

Belongs to the RNA methyltransferase RlmH family. In terms of assembly, homodimer.

Its subcellular location is the cytoplasm. It catalyses the reaction pseudouridine(1915) in 23S rRNA + S-adenosyl-L-methionine = N(3)-methylpseudouridine(1915) in 23S rRNA + S-adenosyl-L-homocysteine + H(+). In terms of biological role, specifically methylates the pseudouridine at position 1915 (m3Psi1915) in 23S rRNA. The polypeptide is Ribosomal RNA large subunit methyltransferase H (Bifidobacterium animalis subsp. lactis (strain AD011)).